A 322-amino-acid chain; its full sequence is HPr kinase/phosphorylase (322 aa).

Active-site residues include His146 and Lys167. ATP is bound at residue 161-168 (GDSGLGKS). Residue Ser168 coordinates Mg(2+). The active-site Proton acceptor; for phosphorylation activity. Proton donor; for dephosphorylation activity is Asp185. An important for the catalytic mechanism of both phosphorylation and dephosphorylation region spans residues 209–218 (LEVRGLGLLD). Glu210 provides a ligand contact to Mg(2+). Residue Arg250 is part of the active site. The segment at 271-276 (QVAAGR) is important for the catalytic mechanism of dephosphorylation.

This sequence belongs to the HPrK/P family. Homohexamer. The cofactor is Mg(2+).

The enzyme catalyses [HPr protein]-L-serine + ATP = [HPr protein]-O-phospho-L-serine + ADP + H(+). It catalyses the reaction [HPr protein]-O-phospho-L-serine + phosphate + H(+) = [HPr protein]-L-serine + diphosphate. In terms of biological role, catalyzes the ATP- as well as the pyrophosphate-dependent phosphorylation of a specific serine residue in HPr, a phosphocarrier protein of the phosphoenolpyruvate-dependent sugar phosphotransferase system (PTS). HprK/P also catalyzes the pyrophosphate-producing, inorganic phosphate-dependent dephosphorylation (phosphorolysis) of seryl-phosphorylated HPr (P-Ser-HPr). This chain is HPr kinase/phosphorylase, found in Burkholderia multivorans (strain ATCC 17616 / 249).